The chain runs to 385 residues: NADH-quinone oxidoreductase subunit H (385 aa).

8 helical membrane passes run G14–L34, F80–I100, I130–M150, I172–F192, L219–F239, M280–V300, L325–V345, and M365–L385.

It belongs to the complex I subunit 1 family. As to quaternary structure, NDH-1 is composed of 14 different subunits. Subunits NuoA, H, J, K, L, M, N constitute the membrane sector of the complex.

The protein resides in the cell inner membrane. It catalyses the reaction a quinone + NADH + 5 H(+)(in) = a quinol + NAD(+) + 4 H(+)(out). Functionally, NDH-1 shuttles electrons from NADH, via FMN and iron-sulfur (Fe-S) centers, to quinones in the respiratory chain. The immediate electron acceptor for the enzyme in this species is believed to be ubiquinone. Couples the redox reaction to proton translocation (for every two electrons transferred, four hydrogen ions are translocated across the cytoplasmic membrane), and thus conserves the redox energy in a proton gradient. This subunit may bind ubiquinone. This Bdellovibrio bacteriovorus (strain ATCC 15356 / DSM 50701 / NCIMB 9529 / HD100) protein is NADH-quinone oxidoreductase subunit H.